The following is a 120-amino-acid chain: Ribonuclease P protein component (120 aa).

Belongs to the RnpA family. Consists of a catalytic RNA component (M1 or rnpB) and a protein subunit.

It carries out the reaction Endonucleolytic cleavage of RNA, removing 5'-extranucleotides from tRNA precursor.. In terms of biological role, RNaseP catalyzes the removal of the 5'-leader sequence from pre-tRNA to produce the mature 5'-terminus. It can also cleave other RNA substrates such as 4.5S RNA. The protein component plays an auxiliary but essential role in vivo by binding to the 5'-leader sequence and broadening the substrate specificity of the ribozyme. This chain is Ribonuclease P protein component, found in Azoarcus sp. (strain BH72).